The following is a 20-amino-acid chain: Malate dehydrogenase (20 aa).

Position 8-14 (8-14 (GAAGQIG)) interacts with NAD(+).

Belongs to the LDH/MDH superfamily. MDH type 2 family.

It carries out the reaction (S)-malate + NAD(+) = oxaloacetate + NADH + H(+). In terms of biological role, catalyzes the reversible oxidation of malate to oxaloacetate. The polypeptide is Malate dehydrogenase (mdh) (Microtetraspora glauca).